The following is a 294-amino-acid chain: Putative ribose uptake protein RbsU (294 aa).

The next 10 membrane-spanning stretches (helical) occupy residues Asn2–Gly24, Ile34–Ile56, Ile63–Val82, Met92–Trp114, Leu121–Ser140, Gly150–Pro172, Gly179–Gly198, Ile218–Ala235, Leu242–Leu264, and Ile274–Ile293.

Belongs to the GRP transporter (TC 2.A.7.5) family.

The protein resides in the cell membrane. Its function is as follows. Could be involved in the uptake of ribose. The polypeptide is Putative ribose uptake protein RbsU (rbsU) (Latilactobacillus sakei subsp. sakei (strain 23K) (Lactobacillus sakei subsp. sakei)).